Consider the following 204-residue polypeptide: uncharacterized protein (204 aa).

The disordered stretch occupies residues 1–20 (MQNPLPEVMSPEHDKRTTTP).

This is an uncharacterized protein from Frog virus 3 (isolate Goorha) (FV-3).